The sequence spans 267 residues: Ribosomal RNA small subunit methyltransferase A (267 aa).

Positions 13, 15, 39, 59, 87, and 106 each coordinate S-adenosyl-L-methionine.

This sequence belongs to the class I-like SAM-binding methyltransferase superfamily. rRNA adenine N(6)-methyltransferase family. RsmA subfamily.

It localises to the cytoplasm. The catalysed reaction is adenosine(1518)/adenosine(1519) in 16S rRNA + 4 S-adenosyl-L-methionine = N(6)-dimethyladenosine(1518)/N(6)-dimethyladenosine(1519) in 16S rRNA + 4 S-adenosyl-L-homocysteine + 4 H(+). In terms of biological role, specifically dimethylates two adjacent adenosines (A1518 and A1519) in the loop of a conserved hairpin near the 3'-end of 16S rRNA in the 30S particle. May play a critical role in biogenesis of 30S subunits. This Sulfurimonas denitrificans (strain ATCC 33889 / DSM 1251) (Thiomicrospira denitrificans (strain ATCC 33889 / DSM 1251)) protein is Ribosomal RNA small subunit methyltransferase A.